Consider the following 156-residue polypeptide: Small ribosomal subunit protein uS7 (156 aa).

The protein belongs to the universal ribosomal protein uS7 family. As to quaternary structure, part of the 30S ribosomal subunit. Contacts proteins S9 and S11.

In terms of biological role, one of the primary rRNA binding proteins, it binds directly to 16S rRNA where it nucleates assembly of the head domain of the 30S subunit. Is located at the subunit interface close to the decoding center, probably blocks exit of the E-site tRNA. In Geotalea daltonii (strain DSM 22248 / JCM 15807 / FRC-32) (Geobacter daltonii), this protein is Small ribosomal subunit protein uS7.